Here is a 271-residue protein sequence, read N- to C-terminus: Methyltransferase psoC (271 aa).

The protein belongs to the methyltransferase superfamily. LaeA methyltransferase family.

Its pathway is secondary metabolite biosynthesis. Its function is as follows. Methyltransferase; part of the gene cluster that mediates the biosynthesis of pseurotin A, a competitive inhibitor of chitin synthase and an inducer of nerve-cell proliferation. The PKS-NRPS hybrid synthetase psoA is responsible for the biosynthesis of azaspirene, one of the first intermediates having the 1-oxa-7-azaspiro[4,4]-non-2-ene-4,6-dione core of pseurotin, via condensation of one acetyl-CoA, 4 malonyl-CoA, and a L-phenylalanine molecule. The dual-functional monooxygenase/methyltransferase psoF seems to be involved in the addition of the C3 methyl group onto the pseurotin scaffold. Azaspirene is then converted to synerazol through 4 steps including oxidation of C17 by the cytochrome P450 monooxygenase psoD, O-methylation of the hydroxy group of C8 by the methyltransferase psoC, and the trans-to-cis isomerization of the C13 olefin by the glutathione S-transferase psoE. The fourth step of synerazol production is performed by the dual-functional monooxygenase/methyltransferase psoF which seems to catalyze the epoxidation of the intermediate deepoxy-synerazol. Synerazol can be attacked by a water molecule nonenzymatically at two different positions to yield two diol products, pseurotin A and pseurotin D. This is Methyltransferase psoC from Aspergillus fumigatus (strain ATCC MYA-4609 / CBS 101355 / FGSC A1100 / Af293) (Neosartorya fumigata).